The primary structure comprises 776 residues: Microtubule-associated protein tau (776 aa).

Over residues 1-26 (MAEPRQEFDVMEDHAGTYGLGDRKDQ) the composition is skewed to basic and acidic residues. Residues 1–591 (MAEPRQEFDV…PVPMPDLKNV (591 aa)) form a disordered region. Alanine 2 is modified (N-acetylalanine). A phosphotyrosine mark is found at tyrosine 18 and tyrosine 29. Lysine 44 participates in a covalent cross-link: Glycyl lysine isopeptide (Lys-Gly) (interchain with G-Cter in ubiquitin). Phosphoserine is present on residues serine 46 and serine 61. A compositionally biased stretch (polar residues) spans 61 to 71 (SETSDAKSTPT). Phosphothreonine occurs at positions 69, 71, and 111. Basic and acidic residues-rich tracts occupy residues 179 to 189 (EGGRHAPELLK) and 207 to 216 (GGKERPGIKE). The segment covering 217–228 (EVDEDRDVDESS) has biased composition (acidic residues). The span at 314-323 (EQAHSEEHLG) shows a compositional bias: basic and acidic residues. The span at 325 to 340 (AAFPGAPGEGPEAQGP) shows a compositional bias: low complexity. 2 stretches are compositionally biased toward basic and acidic residues: residues 344–356 (EDTK…EPSE) and 381–393 (KSKD…DKKA). Positions 442 to 453 (VSSVTXRTGSSG) are enriched in low complexity. A compositionally biased stretch (basic and acidic residues) spans 455 to 466 (KEMKLKGADGKT). Threonine 470 carries the post-translational modification Phosphothreonine. At arginine 472 the chain carries Omega-N-methylarginine. Lysine 480 carries the post-translational modification N6,N6-dimethyllysine; alternate. Lysine 480 is subject to N6-acetyllysine; alternate. A phosphothreonine mark is found at threonine 486, threonine 492, and threonine 498. 3 positions are modified to phosphoserine: serine 502, serine 526, and serine 530. Residues 517–528 (KSERGEPPKSGD) show a composition bias toward basic and acidic residues. Positions 529 to 549 (RSGYSSPGSPGTPGSRSRTPS) are enriched in low complexity. Tyrosine 532 is modified (phosphotyrosine). Serine 533, serine 534, and serine 537 each carry phosphoserine. A phosphothreonine mark is found at threonine 540 and threonine 547. At serine 549 the chain carries Phosphoserine. Residue threonine 552 is modified to Phosphothreonine. Position 560 is an N6-acetyllysine (lysine 560). Threonine 566 is modified (phosphothreonine). A phosphoserine mark is found at serine 570 and serine 572. 4 Tau/MAP repeats span residues 579–609 (QTAP…GGGK), 610–640 (VQII…GGGS), 641–671 (VQIV…GGGQ), and 672–703 (VEVK…GGGN). Residue lysine 589 forms a Glycyl lysine isopeptide (Lys-Gly) (interchain with G-Cter in ubiquitin) linkage. Lysine 594 carries the post-translational modification N6-acetyllysine; alternate. Lysine 594 bears the N6-methyllysine; alternate mark. Lysine 594 is covalently cross-linked (Glycyl lysine isopeptide (Lys-Gly) (interchain with G-Cter in ubiquitin); alternate). Serine 597 bears the Phosphoserine mark. Residue lysine 602 forms a Glycyl lysine isopeptide (Lys-Gly) (interchain with G-Cter in ubiquitin) linkage. An N6-acetyllysine; alternate modification is found at lysine 616. Lysine 616 is covalently cross-linked (Glycyl lysine isopeptide (Lys-Gly) (interchain with G-Cter in ubiquitin); alternate). 2 positions are modified to phosphoserine: serine 620 and serine 624. Lysine 625 bears the N6-acetyllysine mark. Serine 628 carries the post-translational modification Phosphoserine. Lysine 633 bears the N6-acetyllysine; alternate mark. A Glycyl lysine isopeptide (Lys-Gly) (interchain with G-Cter in ubiquitin); alternate cross-link involves residue lysine 633. Phosphoserine is present on serine 640. Lysine 646 carries the post-translational modification N6,N6-dimethyllysine; alternate. N6-acetyllysine; alternate is present on residues lysine 646, lysine 652, and lysine 656. Glycyl lysine isopeptide (Lys-Gly) (interchain with G-Cter in ubiquitin); alternate cross-links involve residues lysine 646, lysine 652, and lysine 656. Serine 659 carries the phosphoserine modification. N6-acetyllysine; alternate occurs at positions 666, 678, and 682. Glycyl lysine isopeptide (Lys-Gly) (interchain with G-Cter in ubiquitin); alternate cross-links involve residues lysine 666, lysine 678, and lysine 682. Arginine 684 is modified (omega-N-methylarginine). A Phosphoserine modification is found at serine 687. Lysine 688 is covalently cross-linked (Glycyl lysine isopeptide (Lys-Gly) (interchain with G-Cter in ubiquitin)). Serine 691 bears the Phosphoserine mark. At lysine 704 the chain carries N6-acetyllysine; alternate. Lysine 704 is covalently cross-linked (Glycyl lysine isopeptide (Lys-Gly) (interchain with G-Cter in ubiquitin); alternate). Lysine 710 is covalently cross-linked (Glycyl lysine isopeptide (Lys-Gly) (interchain with G-Cter in ubiquitin)). An N6-acetyllysine; alternate modification is found at lysine 720. Lysine 720 participates in a covalent cross-link: Glycyl lysine isopeptide (Lys-Gly) (interchain with G-Cter in ubiquitin); alternate. Tyrosine 729 carries the phosphotyrosine modification. Serine 731 and serine 735 each carry phosphoserine. Residues 733–752 (VVSGDTSPRHLSNVSSTGSI) are disordered. Positions 736–751 (GDTSPRHLSNVSSTGS) are enriched in polar residues. Phosphothreonine is present on threonine 738. 4 positions are modified to phosphoserine: serine 739, serine 744, serine 751, and serine 757. Residue threonine 762 is modified to Phosphothreonine.

As to quaternary structure, interacts with MARK1, MARK2, MARK3 and MARK4. Interacts with SQSTM1 when polyubiquitinated. Interacts with PSMC2 through SQSTM1. Interacts with FKBP4. Binds to CSNK1D. Interacts with SGK1. Interacts with EPM2A; the interaction dephosphorylates MAPT at Ser-396. Interacts with PIN1. Interacts with LRRK2. Interacts with LRP1, leading to endocytosis; this interaction is reduced in the presence of LRPAP1/RAP. In terms of processing, polyubiquitinated. Requires functional TRAF6 and may provoke SQSTM1-dependent degradation by the proteasome. Phosphorylation at various serine and threonine residues in S-P or T-P motifs by proline-directed protein kinases (PDPK1, CDK1, CDK5, GSK3, MAPK) (a few sites per protein in interphase, more in mitosis), and at serine residues in K-X-G-S motifs by MAP/microtubule affinity-regulating kinase (MARK1, MARK2, MARK3 or MARK4), causing detachment from microtubules, and their disassembly. Phosphorylation at Ser-597 by BRSK1 and BRSK2 in neurons affects ability to bind microtubules and plays a role in neuron polarization. Phosphorylated by PHK. Dephosphorylation at several serine and threonine residues by the serine/threonine phosphatase PPP5C.

It localises to the cytoplasm. The protein resides in the cytosol. The protein localises to the cell membrane. Its subcellular location is the cytoskeleton. It is found in the cell projection. It localises to the axon. The protein resides in the dendrite. Its function is as follows. Promotes microtubule assembly and stability, and might be involved in the establishment and maintenance of neuronal polarity. The C-terminus binds axonal microtubules while the N-terminus binds neural plasma membrane components, suggesting that tau functions as a linker protein between both. Axonal polarity is predetermined by tau localization (in the neuronal cell) in the domain of the cell body defined by the centrosome. The short isoforms allow plasticity of the cytoskeleton whereas the longer isoforms may preferentially play a role in its stabilization. The polypeptide is Microtubule-associated protein tau (MAPT) (Hylobates lar (Lar gibbon)).